A 178-amino-acid chain; its full sequence is Interleukin-1 receptor antagonist protein (178 aa).

The signal sequence occupies residues Met-1–Gly-26. An intrachain disulfide couples Cys-92 to Cys-142. Asn-110 is a glycosylation site (N-linked (GlcNAc...) asparagine).

It belongs to the IL-1 family.

Its subcellular location is the secreted. Functionally, anti-inflammatory antagonist of interleukin-1 family of proinflammatory cytokines such as interleukin-1beta/IL1B and interleukin-1alpha/IL1A. Protects from immune dysregulation and uncontrolled systemic inflammation triggered by IL1 for a range of innate stimulatory agents such as pathogens. This Rattus norvegicus (Rat) protein is Interleukin-1 receptor antagonist protein (Il1rn).